We begin with the raw amino-acid sequence, 1101 residues long: Furin-like protease 1, isoform 1-CRR (1101 aa).

The interval 1 to 57 is disordered; it reads MKNDVVRWSRQPTSNTTNSSSSSRSDSNSTHKHRSKSNKLNARQLGSNAARSCQQRS. Residues 13-28 show a composition bias toward low complexity; that stretch reads TSNTTNSSSSSRSDSN. N-linked (GlcNAc...) asparagine glycosylation is found at N15, N18, and N28. The segment covering 38–57 has biased composition (polar residues); sequence NKLNARQLGSNAARSCQQRS. N108 carries an N-linked (GlcNAc...) asparagine glycan. Residues 119-139 form a helical membrane-spanning segment; it reads VFLLALQFSAVVFLCNINVGF. Residues 150-163 show a composition bias toward low complexity; the sequence is SAGGSSPAAPSSAP. The tract at residues 150–187 is disordered; that stretch reads SAGGSSPAAPSSAPSSPPTVAVPPPPPPSSALKVDPNG. Pro residues predominate over residues 164–178; it reads SSPPTVAVPPPPPPS. A glycan (N-linked (GlcNAc...) asparagine) is linked at N333. The 315-residue stretch at 340–654 folds into the Peptidase S8 domain; sequence MWYLNRGGGL…YGLMDAAEMV (315 aa). Residues D372 and H413 each act as charge relay system in the active site. The N-linked (GlcNAc...) asparagine glycan is linked to N426. 2 cysteine pairs are disulfide-bonded: C430–C579 and C522–C552. The active-site Charge relay system is S587. A glycan (N-linked (GlcNAc...) asparagine) is linked at N606. A P/Homo B domain is found at 662-791; it reads AVPEQQRCEI…DMIFYGTETP (130 aa). C669 and C695 are oxidised to a cystine. 2 N-linked (GlcNAc...) asparagine glycosylation sites follow: N727 and N859. Residues 886–915 form a disordered region; that stretch reads EEDEQDDEVTRGPVNPYSSSPMDHSLLMSN. A compositionally biased stretch (polar residues) spans 901–915; sequence PYSSSPMDHSLLMSN. The N-linked (GlcNAc...) asparagine glycan is linked to N978. A helical transmembrane segment spans residues 1014 to 1034; it reads TVLLLVSVIFTLMGVAVAGGI.

Belongs to the peptidase S8 family. Furin subfamily. It depends on Ca(2+) as a cofactor. In terms of tissue distribution, in adults, isoform 1-CRR is expressed in CNS, fat body, and female reproductive tissues, and in embryos, in anal pads, hindgut, developing antennomaxillary complex, oenocytes, clipeolabrum, pharynx, trachea, CNS and developing posterior spiracles.

It localises to the golgi apparatus membrane. The enzyme catalyses Release of mature proteins from their proproteins by cleavage of -Arg-Xaa-Yaa-Arg-|-Zaa- bonds, where Xaa can be any amino acid and Yaa is Arg or Lys. Releases albumin, complement component C3 and von Willebrand factor from their respective precursors.. In terms of biological role, furin is likely to represent the ubiquitous endoprotease activity within constitutive secretory pathways and capable of cleavage at the RX(K/R)R consensus motif. In Drosophila melanogaster (Fruit fly), this protein is Furin-like protease 1, isoform 1-CRR (Fur1).